The following is a 309-amino-acid chain: Coenzyme PQQ synthesis protein B (309 aa).

This sequence belongs to the PqqB family.

The protein operates within cofactor biosynthesis; pyrroloquinoline quinone biosynthesis. May be involved in the transport of PQQ or its precursor to the periplasm. The polypeptide is Coenzyme PQQ synthesis protein B (Bradyrhizobium diazoefficiens (strain JCM 10833 / BCRC 13528 / IAM 13628 / NBRC 14792 / USDA 110)).